A 406-amino-acid chain; its full sequence is Glycosylated lysosomal membrane protein (406 aa).

An N-terminal signal peptide occupies residues 1 to 35; it reads MRGSVECTWGWGHCAPSPLLLWTLLLFAAPFGLLG. Topologically, residues 36-372 are lumenal; that stretch reads EKTRQVSLEV…VDGLSPLVLG (337 aa). 5 N-linked (GlcNAc...) asparagine glycosylation sites follow: N65, N134, N159, N187, and N230. Residues 373–393 form a helical membrane-spanning segment; that stretch reads IMAVALGAPGLMLLGGGLVLL. At 394-406 the chain is on the cytoplasmic side; sequence LHHKKYSEYQSIN. Residues 402-406 carry the Lysosomal targeting motif motif; that stretch reads YQSIN.

It belongs to the GLMP family. As to quaternary structure, interacts (via lumenal domain) with lysosomal protein MFSD1; the interaction starts while both proteins are still in the endoplasmic reticulum and is required for stabilization of MFSD1 in lysosomes but has no direct effect on its targeting to lysosomes or transporter activity. In terms of processing, highly N-glycosylated. N-glycosylation is essential for GLMP stability and for MFSD1 lysosomal localization.

It is found in the lysosome membrane. Required to protect lysosomal transporter MFSD1 from lysosomal proteolysis and for MFSD1 lysosomal localization. The protein is Glycosylated lysosomal membrane protein of Homo sapiens (Human).